A 481-amino-acid polypeptide reads, in one-letter code: MQWEVVIGLEIHTQLSTQSKIFSGSATTFGSEPNTQASLVDLGMPGVLPVLNKEAVRMAVKFGLAVDAEIGQHNVFARKNYFYPDLPKGYQISQMELPIVGKGHLDITLEDGTVKRIGITRAHLEEDAGKSLHEDFQGMTGIDLNRAGTPLLEIVSEPDMRSAKEAVAYVKAIHAIVRYLGICDGNMAEGSLRCDCNVSIRPKGQVEFGTRCEIKNVNSFRFIEKAINSEIQRQIDLIEDGGKVIQQTRLYDPNTNETRAMRSKEEANDYRYFPDPDLLPVIIEDSFLEETRATLPELPPQKRERFQSQFGLSTYDASVLASSREQADYFEQVVSISGDAKLAANWVMVELGSLLNKQGLEIEQSPVSAEQLGGMLKRITDNTISGKIAKMVFEAMANGEGSADEVIDKRGLKQVTDSGAIESMLDEMLAANAEQVEQYRAADEAKRGKMFGFFVGQAMKASKGKANPQQVNELLKAKLEG.

This sequence belongs to the GatB/GatE family. GatB subfamily. As to quaternary structure, heterotrimer of A, B and C subunits.

It catalyses the reaction L-glutamyl-tRNA(Gln) + L-glutamine + ATP + H2O = L-glutaminyl-tRNA(Gln) + L-glutamate + ADP + phosphate + H(+). The enzyme catalyses L-aspartyl-tRNA(Asn) + L-glutamine + ATP + H2O = L-asparaginyl-tRNA(Asn) + L-glutamate + ADP + phosphate + 2 H(+). Allows the formation of correctly charged Asn-tRNA(Asn) or Gln-tRNA(Gln) through the transamidation of misacylated Asp-tRNA(Asn) or Glu-tRNA(Gln) in organisms which lack either or both of asparaginyl-tRNA or glutaminyl-tRNA synthetases. The reaction takes place in the presence of glutamine and ATP through an activated phospho-Asp-tRNA(Asn) or phospho-Glu-tRNA(Gln). The chain is Aspartyl/glutamyl-tRNA(Asn/Gln) amidotransferase subunit B from Pseudomonas savastanoi pv. phaseolicola (strain 1448A / Race 6) (Pseudomonas syringae pv. phaseolicola (strain 1448A / Race 6)).